We begin with the raw amino-acid sequence, 213 residues long: MTTTTPDLTIVRAGTLGYEAAWEEQRRLHESVVADERGDAVLLLEHPSVYTAGKRTEPWDRPMDGTPVIDVDRGGKITWHGPGQLVGYPILRLPNPVDVVAYVRRVEQMLIDVCAEFGLVAGRIEGRSGVWVPADDRGPARKVAAIGIRVARGVTLHGFSLNCDCDLTYYDRIVPCGISDAGVTSLAAELGRPVTVADALPVVERHLPTLIEP.

In terms of domain architecture, BPL/LPL catalytic spans 35–213; sequence DERGDAVLLL…ERHLPTLIEP (179 aa). Residues 73–80, 145–147, and 158–160 contribute to the substrate site; these read RGGKITWH, AIG, and GFS. Residue Cys176 is the Acyl-thioester intermediate of the active site.

Belongs to the LipB family.

Its subcellular location is the cytoplasm. It carries out the reaction octanoyl-[ACP] + L-lysyl-[protein] = N(6)-octanoyl-L-lysyl-[protein] + holo-[ACP] + H(+). Its pathway is protein modification; protein lipoylation via endogenous pathway; protein N(6)-(lipoyl)lysine from octanoyl-[acyl-carrier-protein]: step 1/2. In terms of biological role, catalyzes the transfer of endogenously produced octanoic acid from octanoyl-acyl-carrier-protein onto the lipoyl domains of lipoate-dependent enzymes. Lipoyl-ACP can also act as a substrate although octanoyl-ACP is likely to be the physiological substrate. The polypeptide is Octanoyltransferase (Salinispora tropica (strain ATCC BAA-916 / DSM 44818 / JCM 13857 / NBRC 105044 / CNB-440)).